Here is a 309-residue protein sequence, read N- to C-terminus: Taste receptor type 2 member 113 (309 aa).

At 1–8 (MVAVLQST) the chain is on the extracellular side. Residues 9-29 (FAIIFSMEFIVGTLGNGFIIL) traverse the membrane as a helical segment. Residues 30 to 55 (MTCIDWVRRRKISLVDQILTALAITR) are Cytoplasmic-facing. The helical transmembrane segment at 56 to 76 (ITLILLVFIDWWVSVLFPALH) threads the bilayer. At 77–101 (ETGKILRMYFISWTVINHCNLWLTA) the chain is on the extracellular side. A helical transmembrane segment spans residues 102–122 (SLSIIYFLKIASFSSIIFLYL). Residues 123–127 (KFRVK) lie on the Cytoplasmic side of the membrane. Residues 128 to 148 (NVVFVTLLVSLFFLFINTAIV) traverse the membrane as a helical segment. Residues 149–185 (NVYFDVCFDGVQRNVSQVSRLYNHEQICKFLSFTNPM) are Extracellular-facing. An N-linked (GlcNAc...) asparagine glycan is attached at asparagine 162. Residues 186–206 (FAFIPFVTSMATFFLLIFSLW) traverse the membrane as a helical segment. Residues 207–229 (RHLKNMKHNAEGCRDVSTIVHIR) lie on the Cytoplasmic side of the membrane. A helical transmembrane segment spans residues 230-250 (ALQTIIVSVVLYSTFFLSFFV). The Extracellular portion of the chain corresponds to 251 to 262 (KVWSSGSPERYL). The chain crosses the membrane as a helical span at residues 263 to 283 (IFLFVWALGNAVLPAHTFVLI). The Cytoplasmic portion of the chain corresponds to 284–309 (WGNCRLRWASLSLMLWLRYRFKNIDV).

Belongs to the G-protein coupled receptor T2R family.

The protein localises to the membrane. Its function is as follows. Putative taste receptor which may play a role in the perception of bitterness. In Rattus norvegicus (Rat), this protein is Taste receptor type 2 member 113.